A 422-amino-acid chain; its full sequence is Cytochrome P-450 monooxygenase DoxA (422 aa).

Cys-369 provides a ligand contact to heme.

Belongs to the cytochrome P450 family. Monomer. Requires heme as cofactor.

The protein localises to the cytoplasm. It catalyses the reaction 13-deoxydaunorubicin + NADPH + O2 + H(+) = 13-dihydrodaunorubicin + NADP(+) + H2O. The catalysed reaction is 13-dihydrodaunorubicin + NADPH + O2 + H(+) = daunorubicin + NADP(+) + 2 H2O. The enzyme catalyses 13-deoxycarminomycin + NADPH + O2 + H(+) = 13-dihydrocarminomycin + NADP(+) + H2O. It carries out the reaction 13-dihydrocarminomycin + NADPH + O2 + H(+) = carminomycin + NADP(+) + 2 H2O. It functions in the pathway antibiotic biosynthesis; daunorubicin biosynthesis. It participates in antibiotic biosynthesis; carminomycin biosynthesis. With respect to regulation, strongly inhibited by dithiothreitol and high ionic strength buffers. Its function is as follows. Involved in the biosynthesis of the anthracyclines carminomycin and daunorubicin (daunomycin) which are aromatic polyketide antibiotics that exhibit high cytotoxicity and are widely applied in the chemotherapy of a variety of cancers. In vivo, DoxA catalyzes the C-13 hydroxylation of 13-deoxycarminomycin and 13-deoxydaunorubicin to yield 13-dihydrocarminomycin and 13-dihydrodaunorubicin, respectively, as well as the oxidation of these 13-dihydro-anthracyclines to their respective 13-keto forms, carminomycin and daunorubicin. In vitro, it also catalyzes the C-14 hydroxylation of daunorubicin to form doxorubicin (adriamycin), although this strain is not a doxorubicin producer. It is not able to accept anthracyclinones (aglycones) and anthracyclines with a 10-carbomethoxyl moiety. 13-oxidation of the anthracyclines possessing the 4-methoxy substitution is greatly favored. The anthracycline analog desacetyladriamycin can be oxidized to 10-hydroxydesacetyladriamycin. It can only use NADP. DoxA acts jointly with DauV. This is Cytochrome P-450 monooxygenase DoxA (doxA) from Streptomyces sp. (strain C5).